The following is a 579-amino-acid chain: Cyclin-T1-5 (579 aa).

Disordered stretches follow at residues 1–27 (MAGVLAGECSYSESGVSSHSRNSHEKQ) and 271–419 (RVPA…GDAL). Polar residues predominate over residues 11-20 (YSESGVSSHS). The span at 274 to 283 (ASQGSEVESS) shows a compositional bias: low complexity. Residues 306-334 (SRQTSSVRSTHEQSNSDNHGGSSKGVLNQ) are compositionally biased toward polar residues. 2 stretches are compositionally biased toward basic and acidic residues: residues 349–380 (DNKEEIERETKESSLHLESHPAHKDNVREAPH) and 389–414 (PGKDNSEREGGELQDDGAVHKSRNVD). Ser-423 is modified (phosphoserine). 3 stretches are compositionally biased toward basic and acidic residues: residues 474 to 512 (DEKTKERKVQSRPKAENSDLMGTEHGEILDVKGEVKNTE), 538 to 556 (KQSEGKRRHNSENGEESHK), and 563 to 579 (HHGDREHRRHSQENNHS). The disordered stretch occupies residues 474–579 (DEKTKERKVQ…RRHSQENNHS (106 aa)).

The protein belongs to the cyclin family. Cyclin T subfamily.

In Arabidopsis thaliana (Mouse-ear cress), this protein is Cyclin-T1-5 (CYCT1-5).